Here is an 819-residue protein sequence, read N- to C-terminus: Aminopeptidase O (819 aa).

His-479 serves as a coordination point for Zn(2+). Glu-480 serves as the catalytic Proton acceptor. Zn(2+)-binding residues include His-483 and Glu-502. The short motif at 689–699 is the Nucleolar localization signal element; sequence RRPRKRKRREK.

Belongs to the peptidase M1 family. Zn(2+) serves as cofactor.

Its subcellular location is the nucleus. It is found in the nucleolus. The protein localises to the cytoplasm. Its function is as follows. Aminopeptidase which catalyzes the hydrolysis of amino acid residues from the N-terminus of peptide or protein substrates. The protein is Aminopeptidase O of Homo sapiens (Human).